The following is a 235-amino-acid chain: Large ribosomal subunit protein uL1 (235 aa).

Belongs to the universal ribosomal protein uL1 family. In terms of assembly, part of the 50S ribosomal subunit.

Its function is as follows. Binds directly to 23S rRNA. The L1 stalk is quite mobile in the ribosome, and is involved in E site tRNA release. Protein L1 is also a translational repressor protein, it controls the translation of the L11 operon by binding to its mRNA. This is Large ribosomal subunit protein uL1 from Fusobacterium nucleatum subsp. nucleatum (strain ATCC 25586 / DSM 15643 / BCRC 10681 / CIP 101130 / JCM 8532 / KCTC 2640 / LMG 13131 / VPI 4355).